An 886-amino-acid polypeptide reads, in one-letter code: Translation initiation factor IF-2 (886 aa).

Disordered regions lie at residues 46–91 (LDHL…VEVR) and 121–297 (EQQK…HGFT). Over residues 72–82 (STLSVTGSTGK) the composition is skewed to polar residues. 3 stretches are compositionally biased toward basic and acidic residues: residues 130-163 (AELK…AERK), 175-239 (AKSE…DHHL), and 246-260 (REAE…EQGT). In terms of domain architecture, tr-type G spans 386 to 555 (PRAPVVTVMG…LNQSELLELT (170 aa)). Positions 395 to 402 (GHVDHGKT) are G1. 395–402 (GHVDHGKT) contributes to the GTP binding site. Residues 420-424 (GITQH) are G2. The segment at 441–444 (DTPG) is G3. GTP-binding positions include 441–445 (DTPGH) and 495–498 (NKMD). A G4 region spans residues 495 to 498 (NKMD). The tract at residues 531 to 533 (SAK) is G5.

Belongs to the TRAFAC class translation factor GTPase superfamily. Classic translation factor GTPase family. IF-2 subfamily.

It localises to the cytoplasm. Its function is as follows. One of the essential components for the initiation of protein synthesis. Protects formylmethionyl-tRNA from spontaneous hydrolysis and promotes its binding to the 30S ribosomal subunits. Also involved in the hydrolysis of GTP during the formation of the 70S ribosomal complex. The protein is Translation initiation factor IF-2 of Pseudoalteromonas translucida (strain TAC 125).